An 83-amino-acid polypeptide reads, in one-letter code: Small ribosomal subunit protein bS16c (83 aa).

It belongs to the bacterial ribosomal protein bS16 family.

It localises to the plastid. Its subcellular location is the chloroplast. The polypeptide is Small ribosomal subunit protein bS16c (Chaetosphaeridium globosum (Charophycean green alga)).